The sequence spans 208 residues: Imidazole glycerol phosphate synthase subunit HisH (208 aa).

The region spanning 1–206 (MFAIVDYDTG…KEMVSANDFS (206 aa)) is the Glutamine amidotransferase type-1 domain. Cys-79 (nucleophile) is an active-site residue. Catalysis depends on residues His-181 and Glu-183.

As to quaternary structure, heterodimer of HisH and HisF.

It localises to the cytoplasm. The catalysed reaction is 5-[(5-phospho-1-deoxy-D-ribulos-1-ylimino)methylamino]-1-(5-phospho-beta-D-ribosyl)imidazole-4-carboxamide + L-glutamine = D-erythro-1-(imidazol-4-yl)glycerol 3-phosphate + 5-amino-1-(5-phospho-beta-D-ribosyl)imidazole-4-carboxamide + L-glutamate + H(+). The enzyme catalyses L-glutamine + H2O = L-glutamate + NH4(+). Its pathway is amino-acid biosynthesis; L-histidine biosynthesis; L-histidine from 5-phospho-alpha-D-ribose 1-diphosphate: step 5/9. In terms of biological role, IGPS catalyzes the conversion of PRFAR and glutamine to IGP, AICAR and glutamate. The HisH subunit catalyzes the hydrolysis of glutamine to glutamate and ammonia as part of the synthesis of IGP and AICAR. The resulting ammonia molecule is channeled to the active site of HisF. This chain is Imidazole glycerol phosphate synthase subunit HisH, found in Lactiplantibacillus plantarum (strain ATCC BAA-793 / NCIMB 8826 / WCFS1) (Lactobacillus plantarum).